A 339-amino-acid chain; its full sequence is Glycerol-3-phosphate dehydrogenase [NAD(P)+] (339 aa).

The NADPH site is built by S14, Y15, H35, and K109. Residues K109, G138, and T140 each contribute to the sn-glycerol 3-phosphate site. A142 is a binding site for NADPH. The sn-glycerol 3-phosphate site is built by K194, D247, S257, R258, and N259. Catalysis depends on K194, which acts as the Proton acceptor. R258 contacts NADPH. NADPH is bound by residues V282 and E284.

This sequence belongs to the NAD-dependent glycerol-3-phosphate dehydrogenase family.

The protein resides in the cytoplasm. The catalysed reaction is sn-glycerol 3-phosphate + NAD(+) = dihydroxyacetone phosphate + NADH + H(+). It carries out the reaction sn-glycerol 3-phosphate + NADP(+) = dihydroxyacetone phosphate + NADPH + H(+). It participates in membrane lipid metabolism; glycerophospholipid metabolism. In terms of biological role, catalyzes the reduction of the glycolytic intermediate dihydroxyacetone phosphate (DHAP) to sn-glycerol 3-phosphate (G3P), the key precursor for phospholipid synthesis. This Shewanella halifaxensis (strain HAW-EB4) protein is Glycerol-3-phosphate dehydrogenase [NAD(P)+].